The primary structure comprises 551 residues: Thermolysin (551 aa).

Residues 1-31 form the signal peptide; it reads MKRKMKMKLVRFGLAAGLAAQVFFLPYNALA. A propeptide spans 32–235 (activation peptide); the sequence is STEHVTWNQQ…DAAKPGDVKS (204 aa). Ca(2+)-binding residues include Asp292, Asp294, Gln296, and Asp373. A Zn(2+)-binding site is contributed by His377. Glu378 is a catalytic residue. Zn(2+) is bound by residues His381 and Glu401. Ca(2+) is bound by residues Glu412, Asn418, Asp420, Glu422, Glu425, Thr429, Ile432, and Asp435. The Proton donor role is filled by His466.

Belongs to the peptidase M4 family. Requires Ca(2+) as cofactor. Zn(2+) serves as cofactor.

The protein resides in the secreted. It carries out the reaction Preferential cleavage: Xaa-|-Leu &gt; Xaa-|-Phe.. Extracellular zinc metalloprotease. This is Thermolysin (nprS) from Geobacillus stearothermophilus (Bacillus stearothermophilus).